The sequence spans 1165 residues: Tectonin beta-propeller repeat-containing protein 1 (1165 aa).

4 TECPR repeats span residues 209-240 (LSVW…SLLD), 254-285 (DLLW…SIVE), 301-332 (SVVW…IEMV), and 344-376 (DQVW…KAII). Phosphoserine occurs at positions 386, 388, 391, 412, and 417. The interval 404–486 (RGSGESAPSD…GPAPTPAELP (83 aa)) is disordered. In terms of domain architecture, PH spans 611–717 (KTGALQWWCD…WLALLSLSCC (107 aa)). One copy of the TECPR 5 repeat lies at 729–756 (QAIWSITCKGDIFVSEPSPDLEAHEHPL). Residues S938 and S949 each carry the phosphoserine modification. TECPR repeat units lie at residues 953-984 (IALW…LHVG), 998-1029 (YQVW…YHIP), 1044-1075 (TSVY…EHVS), and 1087-1127 (DQVW…DYGI). The segment at 1140–1165 (ATRAPRSSSQEQEPSAPPEAHGPVCC) is disordered. Residues 1143-1153 (APRSSSQEQEP) show a composition bias toward low complexity.

Belongs to the TECPR1 family. In terms of assembly, interacts with ATG5; the interaction is direct. Interacts with WIPI2. Interacts with the ATG5-ATG12 conjugate, the interaction is however mutually exclusive with ATG16, since it does not interact with ATG12-ATG5-ATG16 complex.

It localises to the cytoplasmic vesicle. Its subcellular location is the autophagosome membrane. It is found in the lysosome membrane. Functionally, tethering factor involved in autophagy. Involved in autophagosome maturation by promoting the autophagosome fusion with lysosomes: acts by associating with both the ATG5-ATG12 conjugate and phosphatidylinositol-3-phosphate (PtdIns(3)P) present at the surface of autophagosomes. Also involved in selective autophagy against bacterial pathogens, by being required for phagophore/preautophagosomal structure biogenesis and maturation. This is Tectonin beta-propeller repeat-containing protein 1 (TECPR1) from Homo sapiens (Human).